The following is a 440-amino-acid chain: Xylose isomerase (440 aa).

Catalysis depends on residues His100 and Asp103. Mg(2+) contacts are provided by Glu231, Glu267, His270, Asp295, Asp306, Asp308, and Asp338.

This sequence belongs to the xylose isomerase family. As to quaternary structure, homotetramer. The cofactor is Mg(2+).

The protein localises to the cytoplasm. The enzyme catalyses alpha-D-xylose = alpha-D-xylulofuranose. The protein is Xylose isomerase of Burkholderia multivorans (strain ATCC 17616 / 249).